The chain runs to 203 residues: Reticulon-like protein B12 (203 aa).

The Reticulon domain occupies 24–203; it reads VADVMLWRKK…WANPENKKLS (180 aa). 3 helical membrane passes run 34–54, 55–75, and 132–152; these read NVSV…EAFA, YTIF…LFLW, and VAVS…QTLC.

It localises to the endoplasmic reticulum membrane. The sequence is that of Reticulon-like protein B12 (RTNLB12) from Arabidopsis thaliana (Mouse-ear cress).